Here is a 102-residue protein sequence, read N- to C-terminus: MPAIPLEHGLAVAGILFCLGLVGLMVRRNILFVLMSLEIMMNAAALAFIVAGARWGQPDGQVMFILVISLAAAEASIGLAILLQLYRRFHTLDIDAASEMRG.

Helical transmembrane passes span 6 to 26 (LEHGLAVAGILFCLGLVGLMV), 30 to 50 (ILFVLMSLEIMMNAAALAFIV), and 62 to 82 (VMFILVISLAAAEASIGLAIL).

The protein belongs to the complex I subunit 4L family. In terms of assembly, NDH-1 is composed of 13 different subunits. Subunits NuoA, H, J, K, L, M, N constitute the membrane sector of the complex.

It localises to the cell inner membrane. It catalyses the reaction a quinone + NADH + 5 H(+)(in) = a quinol + NAD(+) + 4 H(+)(out). NDH-1 shuttles electrons from NADH, via FMN and iron-sulfur (Fe-S) centers, to quinones in the respiratory chain. The immediate electron acceptor for the enzyme in this species is believed to be ubiquinone. Couples the redox reaction to proton translocation (for every two electrons transferred, four hydrogen ions are translocated across the cytoplasmic membrane), and thus conserves the redox energy in a proton gradient. In Pseudomonas fluorescens (strain SBW25), this protein is NADH-quinone oxidoreductase subunit K.